Reading from the N-terminus, the 324-residue chain is Phospho-N-acetylmuramoyl-pentapeptide-transferase (324 aa).

Helical transmembrane passes span 5-25 (VILFTILMGFLISVLLSPILI), 50-70 (GTPTMGGVMIILSIIVTTIVM), 77-97 (ISPEMVLLLFVTLGYGLLGFL), 117-137 (LIGQIIIAVVFYAVYHYYNFA), 147-167 (LSFDLGWAYFILVLFMLVGGS), 176-196 (LDGLLSGTAAIAFGAFAILAW), 203-223 (VAIFSVAVVGAVLGFLVFNAH), 227-247 (VFMGDTGSLALGGAIVTIAIL), 250-270 (LEILLVIIGGVFVIETLSVIL), and 302-322 (VVVTFWAAGLLLAVLGIYIEV).

It belongs to the glycosyltransferase 4 family. MraY subfamily. The cofactor is Mg(2+).

The protein localises to the cell membrane. It catalyses the reaction UDP-N-acetyl-alpha-D-muramoyl-L-alanyl-gamma-D-glutamyl-meso-2,6-diaminopimeloyl-D-alanyl-D-alanine + di-trans,octa-cis-undecaprenyl phosphate = di-trans,octa-cis-undecaprenyl diphospho-N-acetyl-alpha-D-muramoyl-L-alanyl-D-glutamyl-meso-2,6-diaminopimeloyl-D-alanyl-D-alanine + UMP. It functions in the pathway cell wall biogenesis; peptidoglycan biosynthesis. In terms of biological role, catalyzes the initial step of the lipid cycle reactions in the biosynthesis of the cell wall peptidoglycan: transfers peptidoglycan precursor phospho-MurNAc-pentapeptide from UDP-MurNAc-pentapeptide onto the lipid carrier undecaprenyl phosphate, yielding undecaprenyl-pyrophosphoryl-MurNAc-pentapeptide, known as lipid I. This Bacillus subtilis (strain 168) protein is Phospho-N-acetylmuramoyl-pentapeptide-transferase.